The sequence spans 327 residues: GMP reductase (327 aa).

The active-site Thioimidate intermediate is Cys176. Position 205–228 (205–228 (IIADGGIRTHGDIAKSIRFGASMV)) interacts with NADP(+).

The protein belongs to the IMPDH/GMPR family. GuaC type 2 subfamily.

It carries out the reaction IMP + NH4(+) + NADP(+) = GMP + NADPH + 2 H(+). Functionally, catalyzes the irreversible NADPH-dependent deamination of GMP to IMP. It functions in the conversion of nucleobase, nucleoside and nucleotide derivatives of G to A nucleotides, and in maintaining the intracellular balance of A and G nucleotides. The chain is GMP reductase from Streptococcus pyogenes serotype M5 (strain Manfredo).